The sequence spans 327 residues: DNA-directed RNA polymerase subunit alpha (327 aa).

The tract at residues 1-233 is alpha N-terminal domain (alpha-NTD); the sequence is MVREKVKVST…NLFIPFLHVE (233 aa). An alpha C-terminal domain (alpha-CTD) region spans residues 265-327; the sequence is KELAFQYIFI…KKILDILEKK (63 aa).

It belongs to the RNA polymerase alpha chain family. As to quaternary structure, in plastids the minimal PEP RNA polymerase catalytic core is composed of four subunits: alpha, beta, beta', and beta''. When a (nuclear-encoded) sigma factor is associated with the core the holoenzyme is formed, which can initiate transcription.

The protein localises to the plastid. Its subcellular location is the chloroplast. It carries out the reaction RNA(n) + a ribonucleoside 5'-triphosphate = RNA(n+1) + diphosphate. Its function is as follows. DNA-dependent RNA polymerase catalyzes the transcription of DNA into RNA using the four ribonucleoside triphosphates as substrates. This Olimarabidopsis pumila (Dwarf rocket) protein is DNA-directed RNA polymerase subunit alpha.